A 106-amino-acid polypeptide reads, in one-letter code: Immunoglobulin lambda constant 2 (106 aa).

Residues 7 to 101 (PSVTLFPPSS…EGSTVEKTVA (95 aa)) enclose the Ig-like domain. Cys-28 and Cys-87 form a disulfide bridge.

Immunoglobulins are composed of two identical heavy chains and two identical light chains; disulfide-linked.

The protein resides in the secreted. Its subcellular location is the cell membrane. Functionally, constant region of immunoglobulin light chains. Immunoglobulins, also known as antibodies, are membrane-bound or secreted glycoproteins produced by B lymphocytes. In the recognition phase of humoral immunity, the membrane-bound immunoglobulins serve as receptors which, upon binding of a specific antigen, trigger the clonal expansion and differentiation of B lymphocytes into immunoglobulins-secreting plasma cells. Secreted immunoglobulins mediate the effector phase of humoral immunity, which results in the elimination of bound antigens. The antigen binding site is formed by the variable domain of one heavy chain, together with that of its associated light chain. Thus, each immunoglobulin has two antigen binding sites with remarkable affinity for a particular antigen. The variable domains are assembled by a process called V-(D)-J rearrangement and can then be subjected to somatic hypermutations which, after exposure to antigen and selection, allow affinity maturation for a particular antigen. The sequence is that of Immunoglobulin lambda constant 2 from Homo sapiens (Human).